The sequence spans 243 residues: Ubiquinone biosynthesis O-methyltransferase (243 aa).

S-adenosyl-L-methionine-binding residues include R45, G65, D86, and L130.

It belongs to the methyltransferase superfamily. UbiG/COQ3 family.

The catalysed reaction is a 3-demethylubiquinol + S-adenosyl-L-methionine = a ubiquinol + S-adenosyl-L-homocysteine + H(+). The enzyme catalyses a 3-(all-trans-polyprenyl)benzene-1,2-diol + S-adenosyl-L-methionine = a 2-methoxy-6-(all-trans-polyprenyl)phenol + S-adenosyl-L-homocysteine + H(+). It participates in cofactor biosynthesis; ubiquinone biosynthesis. In terms of biological role, O-methyltransferase that catalyzes the 2 O-methylation steps in the ubiquinone biosynthetic pathway. This chain is Ubiquinone biosynthesis O-methyltransferase, found in Idiomarina loihiensis (strain ATCC BAA-735 / DSM 15497 / L2-TR).